We begin with the raw amino-acid sequence, 509 residues long: Lysine--tRNA ligase (509 aa).

Mg(2+)-binding residues include Glu-395 and Glu-402.

This sequence belongs to the class-II aminoacyl-tRNA synthetase family. Homodimer. It depends on Mg(2+) as a cofactor.

The protein resides in the cytoplasm. It carries out the reaction tRNA(Lys) + L-lysine + ATP = L-lysyl-tRNA(Lys) + AMP + diphosphate. This Fervidobacterium nodosum (strain ATCC 35602 / DSM 5306 / Rt17-B1) protein is Lysine--tRNA ligase.